A 209-amino-acid polypeptide reads, in one-letter code: Large ribosomal subunit protein uL3 (209 aa).

Belongs to the universal ribosomal protein uL3 family. As to quaternary structure, part of the 50S ribosomal subunit. Forms a cluster with proteins L14 and L19.

Its function is as follows. One of the primary rRNA binding proteins, it binds directly near the 3'-end of the 23S rRNA, where it nucleates assembly of the 50S subunit. This chain is Large ribosomal subunit protein uL3, found in Pelobacter propionicus (strain DSM 2379 / NBRC 103807 / OttBd1).